The chain runs to 83 residues: Cytochrome b559 subunit alpha (83 aa).

The helical transmembrane segment at 21-35 threads the bilayer; it reads IIHTITVPMLFLAGW. His23 is a heme binding site.

The protein belongs to the PsbE/PsbF family. Heterodimer of an alpha subunit and a beta subunit. PSII is composed of 1 copy each of membrane proteins PsbA, PsbB, PsbC, PsbD, PsbE, PsbF, PsbH, PsbI, PsbJ, PsbK, PsbL, PsbM, PsbT, PsbX, PsbY, PsbZ, Psb30/Ycf12, peripheral proteins PsbO, CyanoQ (PsbQ), PsbU, PsbV and a large number of cofactors. It forms dimeric complexes. The cofactor is heme b.

It is found in the cellular thylakoid membrane. Its function is as follows. This b-type cytochrome is tightly associated with the reaction center of photosystem II (PSII). PSII is a light-driven water:plastoquinone oxidoreductase that uses light energy to abstract electrons from H(2)O, generating O(2) and a proton gradient subsequently used for ATP formation. It consists of a core antenna complex that captures photons, and an electron transfer chain that converts photonic excitation into a charge separation. This is Cytochrome b559 subunit alpha from Acaryochloris marina (strain MBIC 11017).